Reading from the N-terminus, the 295-residue chain is Cbb3-type cytochrome c oxidase subunit CcoP (295 aa).

Residues 1 to 31 (MAQKEKDALSGVETTGHEWDGLRELNNPLPK) are Cytoplasmic-facing. A helical membrane pass occupies residues 32–52 (WWLYIFYVCIAWSLVYYVLYP). The Periplasmic segment spans residues 53 to 295 (AWPLGKSYTK…VYVHNLGGGK (243 aa)). Cytochrome c domains lie at 108-200 (FAMA…LSLN) and 207-292 (AAAE…HNLG). Residues Cys121, Cys124, His125, Met175, Cys220, Cys223, His224, and Met269 each coordinate heme c.

Belongs to the CcoP / FixP family. In terms of assembly, component of the cbb3-type cytochrome c oxidase at least composed of CcoN, CcoO, CcoQ and CcoP. The cofactor is heme c.

The protein resides in the cell inner membrane. Its pathway is energy metabolism; oxidative phosphorylation. In terms of biological role, C-type cytochrome. Part of the cbb3-type cytochrome c oxidase complex. CcoP subunit is required for transferring electrons from donor cytochrome c via its heme groups to CcoO subunit. From there, electrons are shuttled to the catalytic binuclear center of CcoN subunit where oxygen reduction takes place. The complex also functions as a proton pump. In Azospirillum brasilense, this protein is Cbb3-type cytochrome c oxidase subunit CcoP.